The primary structure comprises 526 residues: Outer capsid protein VP5 (526 aa).

The segment at 1–42 (MGKVIRSLNRFGKKVGNALTSNTAKKIYSTIGKAADEFLESE) is involved in membrane permeabilization.

Belongs to the orbivirus VP5 family.

It is found in the virion. In terms of biological role, VP5 protein is one of the two proteins (with VP2) which constitute the virus particle outer capsid. Acts as a membrane permeabilization protein that mediates release of viral particles from endosomal compartments into the cytoplasm. Permeabilization activity is probably negatively regulated by VP2 and is triggered by endosomal degradation of VP2 and exposure to low pH. The protein is Outer capsid protein VP5 (Segment-6) of Bluetongue virus 1 (isolate South Africa) (BTV 1).